A 248-amino-acid polypeptide reads, in one-letter code: tRNA pseudouridine synthase A (248 aa).

The active-site Nucleophile is Asp-52. Tyr-113 contributes to the substrate binding site.

This sequence belongs to the tRNA pseudouridine synthase TruA family. Homodimer.

The enzyme catalyses uridine(38/39/40) in tRNA = pseudouridine(38/39/40) in tRNA. Its function is as follows. Formation of pseudouridine at positions 38, 39 and 40 in the anticodon stem and loop of transfer RNAs. In Mesorhizobium japonicum (strain LMG 29417 / CECT 9101 / MAFF 303099) (Mesorhizobium loti (strain MAFF 303099)), this protein is tRNA pseudouridine synthase A.